The primary structure comprises 277 residues: Diaminopimelate epimerase (277 aa).

Residues asparagine 13, glutamine 46, and asparagine 66 each coordinate substrate. Residue cysteine 75 is the Proton donor of the active site. Substrate is bound by residues 76-77 (GN), asparagine 159, asparagine 192, and 210-211 (ER). Cysteine 219 acts as the Proton acceptor in catalysis. 220–221 (GT) serves as a coordination point for substrate.

Belongs to the diaminopimelate epimerase family. In terms of assembly, homodimer.

The protein localises to the cytoplasm. It catalyses the reaction (2S,6S)-2,6-diaminopimelate = meso-2,6-diaminopimelate. Its pathway is amino-acid biosynthesis; L-lysine biosynthesis via DAP pathway; DL-2,6-diaminopimelate from LL-2,6-diaminopimelate: step 1/1. Catalyzes the stereoinversion of LL-2,6-diaminopimelate (L,L-DAP) to meso-diaminopimelate (meso-DAP), a precursor of L-lysine and an essential component of the bacterial peptidoglycan. The protein is Diaminopimelate epimerase of Azoarcus sp. (strain BH72).